Reading from the N-terminus, the 339-residue chain is Trace amine-associated receptor 1 (339 aa).

The Extracellular portion of the chain corresponds to 1-24 (MMPFCHNIINISCVKNNWSNDVRA). Intrachain disulfides connect Cys5–Cys178, Cys13–Cys88, and Cys96–Cys182. N-linked (GlcNAc...) asparagine glycans are attached at residues Asn10 and Asn17. A helical membrane pass occupies residues 25-49 (SLYSLMVLIILTTLVGNLIVIVSIS). At 50 to 59 (HFKQLHTPTN) the chain is on the cytoplasmic side. Residues 60 to 81 (WLIHSMATVDFLLGCLVMPYSM) form a helical membrane-spanning segment. The Extracellular segment spans residues 82–96 (VRSAEHCWYFGEVFC). The chain crosses the membrane as a helical span at residues 97–119 (KIHTSTDIMLSSASIFHLSFISI). Asp103 contacts 2-phenylethylamine. Topologically, residues 120 to 139 (DRYYAVCDPLRYKAKMNILV) are cytoplasmic. A helical transmembrane segment spans residues 140–161 (ICVMIFISWSVPAVFAFGMIFL). The Extracellular portion of the chain corresponds to 162 to 188 (ELNFKGAEEIYYKHVHCRGGCSVFFSK). Residues 175-186 (HVHCRGGCSVFF) are extracellular Loop 2 (ECL2). The chain crosses the membrane as a helical span at residues 189 to 211 (ISGVLTFMTSFYIPGSIMLCVYY). Residues 212–249 (RIYLIAKEQARLISDANQKLQIGLEMKNGISQSKERKA) lie on the Cytoplasmic side of the membrane. Residues 250–273 (VKTLGIVMGVFLICWCPFFICTVM) form a helical membrane-spanning segment. Over 274-286 (DPFLHYIIPPTLN) the chain is Extracellular. A helical membrane pass occupies residues 287 to 307 (DVLIWFGYLNSTFNPMVYAFF). The Cytoplasmic portion of the chain corresponds to 308-339 (YPWFRKALKMMLFGKIFQKDSSRCKLFLELSS).

It belongs to the G-protein coupled receptor 1 family. As to expression, expressed at low level in both the central and peripheral nervous system. Moderately expressed in stomach. Low levels in amygdala, kidney, and lung, and small intestine. Trace amounts in cerebellum, dorsal root ganglia, hippocampus, hypothalamus, liver, medulla, pancreas, pituitary, pontine reticular formation, prostate, skeletal muscle and spleen.

The protein resides in the endomembrane system. It is found in the endoplasmic reticulum membrane. The protein localises to the cell membrane. Activated by SEP-363856 small molecule: IHCH-7179 acts both as an agonist activator for HTR1A and TAAR1. In terms of biological role, intracellular G-protein coupled receptor for trace amines, which recognizes endogenous amine-containing metabolites such as beta-phenylethylamine (beta-PEA), 3-iodothyronamine (T1AM), isoamylamine (IAA), cadaverine (CAD), cyclohexylamine (CHA), p-tyramine (p-TYR), trimethylamine (TMA), octopamine and tryptamine. Also functions as a receptor for various drugs and psychoactive substances, such as amphetamine and methamphetamine. Unresponsive to classical biogenic amines, such as epinephrine and histamine and only partially activated by dopamine and serotonin. Expressed in both the central and peripheral nervous system: TAAR1 activation regulates the activity of several neurotransmitter signaling pathways by (1) decreasing the basal firing rates of the neurons involved and by (2) lowering the sensitivity of receptors to neurotransmitters. Ligand binding causes a conformation change that triggers signaling via guanine nucleotide-binding proteins (G proteins) and modulates the activity of downstream effectors. TAAR1 is coupled with different G(i)/G(o)-, G(s)- or G(q)/G(11) classes of G alpha proteins depending on the ligand. CAD-binding is coupled to G(i)/G(o) G alpha proteins and mediates inhibition of adenylate cyclase activity. T1AM- or beta-PEA-binding is coupled to G(s) G alpha proteins and mediates activation of adenylate cyclase activity. CHA- or IAA-binding is coupled to G(q)/G(11) G alpha proteins and activates phospholipase C-beta, releasing diacylglycerol (DAG) and inositol 1,4,5-trisphosphate (IP3) second messengers. TMA-binding is coupled with all three G(i)/G(o)-, G(s)- or G(q)/G(11) G alpha protein subtypes. Amphetamine-binding is coupled with G(s)- or G(12)/G(13) G alpha protein subtypes. The protein is Trace amine-associated receptor 1 of Homo sapiens (Human).